Reading from the N-terminus, the 219-residue chain is Phosphatidylserine decarboxylase proenzyme (219 aa).

The active-site Schiff-base intermediate with substrate; via pyruvic acid is Ser-188. The residue at position 188 (Ser-188) is a Pyruvic acid (Ser); by autocatalysis.

It belongs to the phosphatidylserine decarboxylase family. PSD-A subfamily. As to quaternary structure, heterodimer of a large membrane-associated beta subunit and a small pyruvoyl-containing alpha subunit. It depends on pyruvate as a cofactor. In terms of processing, is synthesized initially as an inactive proenzyme. Formation of the active enzyme involves a self-maturation process in which the active site pyruvoyl group is generated from an internal serine residue via an autocatalytic post-translational modification. Two non-identical subunits are generated from the proenzyme in this reaction, and the pyruvate is formed at the N-terminus of the alpha chain, which is derived from the carboxyl end of the proenzyme. The post-translation cleavage follows an unusual pathway, termed non-hydrolytic serinolysis, in which the side chain hydroxyl group of the serine supplies its oxygen atom to form the C-terminus of the beta chain, while the remainder of the serine residue undergoes an oxidative deamination to produce ammonia and the pyruvoyl prosthetic group on the alpha chain.

The protein localises to the cell membrane. It catalyses the reaction a 1,2-diacyl-sn-glycero-3-phospho-L-serine + H(+) = a 1,2-diacyl-sn-glycero-3-phosphoethanolamine + CO2. The protein operates within phospholipid metabolism; phosphatidylethanolamine biosynthesis; phosphatidylethanolamine from CDP-diacylglycerol: step 2/2. Functionally, catalyzes the formation of phosphatidylethanolamine (PtdEtn) from phosphatidylserine (PtdSer). The polypeptide is Phosphatidylserine decarboxylase proenzyme (Citrifermentans bemidjiense (strain ATCC BAA-1014 / DSM 16622 / JCM 12645 / Bem) (Geobacter bemidjiensis)).